Consider the following 192-residue polypeptide: Sarcoplasmic calcium-binding protein 1 (192 aa).

Residue A1 is modified to N-acetylalanine. 4 consecutive EF-hand domains span residues W4 to I39, I56 to G91, A100 to F135, and A136 to F171. Positions 17, 19, 21, 28, 69, 71, 73, 75, 80, 113, 115, 117, and 124 each coordinate Ca(2+).

In terms of assembly, SCPs from crayfish, lobster, and shrimp are polymorphic dimers.

Functionally, like parvalbumins, SCPs seem to be more abundant in fast contracting muscles, but no functional relationship can be established from this distribution. In Astacus leptodactylus (Turkish narrow-clawed crayfish), this protein is Sarcoplasmic calcium-binding protein 1.